An 87-amino-acid chain; its full sequence is Pyocin-S1 immunity protein (87 aa).

This sequence belongs to the colicins ColE2/ColE8/ColE9 and pyocins S1/S2 family.

This is Pyocin-S1 immunity protein (imm1) from Pseudomonas aeruginosa.